The sequence spans 85 residues: Small ribosomal subunit protein bS16c (85 aa).

Belongs to the bacterial ribosomal protein bS16 family.

It is found in the plastid. The protein localises to the chloroplast. The chain is Small ribosomal subunit protein bS16c from Saccharum hybrid (Sugarcane).